A 496-amino-acid polypeptide reads, in one-letter code: tRNA-2-methylthio-N(6)-dimethylallyladenosine synthase (496 aa).

The MTTase N-terminal domain occupies 43–160 (KKVFVTTQGC…LPELYDQSHQ (118 aa)). The [4Fe-4S] cluster site is built by Cys-52, Cys-89, Cys-123, Cys-204, Cys-208, and Cys-211. The region spanning 190-422 (RVEGFKAFVS…QKVIIDSTLA (233 aa)) is the Radical SAM core domain. The TRAM domain occupies 425–493 (HEMVGTTTRV…PHMVKGEIEA (69 aa)).

Belongs to the methylthiotransferase family. MiaB subfamily. In terms of assembly, monomer. It depends on [4Fe-4S] cluster as a cofactor.

The protein localises to the cytoplasm. It catalyses the reaction N(6)-dimethylallyladenosine(37) in tRNA + (sulfur carrier)-SH + AH2 + 2 S-adenosyl-L-methionine = 2-methylsulfanyl-N(6)-dimethylallyladenosine(37) in tRNA + (sulfur carrier)-H + 5'-deoxyadenosine + L-methionine + A + S-adenosyl-L-homocysteine + 2 H(+). Its function is as follows. Catalyzes the methylthiolation of N6-(dimethylallyl)adenosine (i(6)A), leading to the formation of 2-methylthio-N6-(dimethylallyl)adenosine (ms(2)i(6)A) at position 37 in tRNAs that read codons beginning with uridine. The protein is tRNA-2-methylthio-N(6)-dimethylallyladenosine synthase of Psychrobacter arcticus (strain DSM 17307 / VKM B-2377 / 273-4).